Consider the following 190-residue polypeptide: dITP/XTP pyrophosphatase (190 aa).

Residue 7–12 (THNPNK) participates in substrate binding. Mg(2+) contacts are provided by Glu39 and Asp68. The Proton acceptor role is filled by Asp68. Residues Thr69, 148–151 (FGYD), Lys171, and 176–177 (HR) each bind substrate.

Belongs to the HAM1 NTPase family. In terms of assembly, homodimer. It depends on Mg(2+) as a cofactor.

The catalysed reaction is XTP + H2O = XMP + diphosphate + H(+). It carries out the reaction dITP + H2O = dIMP + diphosphate + H(+). The enzyme catalyses ITP + H2O = IMP + diphosphate + H(+). Its function is as follows. Pyrophosphatase that catalyzes the hydrolysis of nucleoside triphosphates to their monophosphate derivatives, with a high preference for the non-canonical purine nucleotides XTP (xanthosine triphosphate), dITP (deoxyinosine triphosphate) and ITP. Seems to function as a house-cleaning enzyme that removes non-canonical purine nucleotides from the nucleotide pool, thus preventing their incorporation into DNA/RNA and avoiding chromosomal lesions. The chain is dITP/XTP pyrophosphatase from Christiangramia forsetii (strain DSM 17595 / CGMCC 1.15422 / KT0803) (Gramella forsetii).